The sequence spans 264 residues: Thiazole synthase (264 aa).

Lysine 100 (schiff-base intermediate with DXP) is an active-site residue. Residues glycine 161, 187–188 (AG), and 209–210 (NT) each bind 1-deoxy-D-xylulose 5-phosphate.

This sequence belongs to the ThiG family. In terms of assembly, homotetramer. Forms heterodimers with either ThiH or ThiS.

Its subcellular location is the cytoplasm. The enzyme catalyses [ThiS sulfur-carrier protein]-C-terminal-Gly-aminoethanethioate + 2-iminoacetate + 1-deoxy-D-xylulose 5-phosphate = [ThiS sulfur-carrier protein]-C-terminal Gly-Gly + 2-[(2R,5Z)-2-carboxy-4-methylthiazol-5(2H)-ylidene]ethyl phosphate + 2 H2O + H(+). It participates in cofactor biosynthesis; thiamine diphosphate biosynthesis. Functionally, catalyzes the rearrangement of 1-deoxy-D-xylulose 5-phosphate (DXP) to produce the thiazole phosphate moiety of thiamine. Sulfur is provided by the thiocarboxylate moiety of the carrier protein ThiS. In vitro, sulfur can be provided by H(2)S. The sequence is that of Thiazole synthase from Nitrosospira multiformis (strain ATCC 25196 / NCIMB 11849 / C 71).